The following is a 399-amino-acid chain: uncharacterized protein (399 aa).

Transmembrane regions (helical) follow at residues 26–46, 266–286, 301–321, 324–344, and 358–378; these read LLTIIGIVIGVLAMVSLISLG, VITIFVVGVAAISLLVGAVGI, IGILKALGAETTDILAIFVVE, FLGLFGGIVGLVLGILLAEVI, and AWISWELIVGVLIFSFLVGVI.

This sequence belongs to the ABC-4 integral membrane protein family.

It localises to the cell membrane. This is an uncharacterized protein from Methanocaldococcus jannaschii (strain ATCC 43067 / DSM 2661 / JAL-1 / JCM 10045 / NBRC 100440) (Methanococcus jannaschii).